Reading from the N-terminus, the 476-residue chain is Sulfate adenylyltransferase subunit 1 (476 aa).

In terms of domain architecture, tr-type G spans 24–243 (KSLLRFLTCG…VDVEKEKEAG (220 aa)). The tract at residues 33-40 (GSVDDGKS) is G1. 33–40 (GSVDDGKS) is a GTP binding site. The segment at 91-95 (GITID) is G2. The tract at residues 112-115 (DTPG) is G3. GTP-binding positions include 112–116 (DTPGH) and 167–170 (NKMD). Positions 167 to 170 (NKMD) are G4. Residues 205–207 (SAL) are G5.

The protein belongs to the TRAFAC class translation factor GTPase superfamily. Classic translation factor GTPase family. CysN/NodQ subfamily. As to quaternary structure, heterodimer composed of CysD, the smaller subunit, and CysN.

The catalysed reaction is sulfate + ATP + H(+) = adenosine 5'-phosphosulfate + diphosphate. Its pathway is sulfur metabolism; hydrogen sulfide biosynthesis; sulfite from sulfate: step 1/3. Its function is as follows. With CysD forms the ATP sulfurylase (ATPS) that catalyzes the adenylation of sulfate producing adenosine 5'-phosphosulfate (APS) and diphosphate, the first enzymatic step in sulfur assimilation pathway. APS synthesis involves the formation of a high-energy phosphoric-sulfuric acid anhydride bond driven by GTP hydrolysis by CysN coupled to ATP hydrolysis by CysD. This Vibrio vulnificus (strain YJ016) protein is Sulfate adenylyltransferase subunit 1.